The following is a 147-amino-acid chain: Cyanate hydratase (147 aa).

Active-site residues include Arg-88, Glu-91, and Ser-114.

It belongs to the cyanase family.

The enzyme catalyses cyanate + hydrogencarbonate + 3 H(+) = NH4(+) + 2 CO2. Functionally, catalyzes the reaction of cyanate with bicarbonate to produce ammonia and carbon dioxide. The protein is Cyanate hydratase of Parasynechococcus marenigrum (strain WH8102).